The chain runs to 944 residues: Nonsense-mediated mRNA decay factor SMG8 (944 aa).

Disordered stretches follow at residues asparagine 560–alanine 597 and glutamine 628–asparagine 653. A compositionally biased stretch (acidic residues) spans glutamine 568–glutamine 583. A compositionally biased stretch (polar residues) spans glutamine 628–aspartate 650.

Belongs to the SMG8 family.

Functionally, involved in nonsense-mediated decay (NMD) of mRNAs containing premature stop codons. Probable component of kinase complex containing nonC and recruited to stalled ribosomes. The sequence is that of Nonsense-mediated mRNA decay factor SMG8 from Drosophila simulans (Fruit fly).